A 35-amino-acid polypeptide reads, in one-letter code: Photosystem II reaction center protein T (35 aa).

A helical transmembrane segment spans residues 3 to 23 (ALVYTFLLVSTLGIIFFAIFF).

This sequence belongs to the PsbT family. In terms of assembly, PSII is composed of 1 copy each of membrane proteins PsbA, PsbB, PsbC, PsbD, PsbE, PsbF, PsbH, PsbI, PsbJ, PsbK, PsbL, PsbM, PsbT, PsbY, PsbZ, Psb30/Ycf12, at least 3 peripheral proteins of the oxygen-evolving complex and a large number of cofactors. It forms dimeric complexes.

Its subcellular location is the plastid. It localises to the chloroplast thylakoid membrane. Functionally, found at the monomer-monomer interface of the photosystem II (PS II) dimer, plays a role in assembly and dimerization of PSII. PSII is a light-driven water plastoquinone oxidoreductase, using light energy to abstract electrons from H(2)O, generating a proton gradient subsequently used for ATP formation. The protein is Photosystem II reaction center protein T of Ginkgo biloba (Ginkgo).